Here is a 284-residue protein sequence, read N- to C-terminus: Diaminopimelate epimerase (284 aa).

Positions 20, 53, and 73 each coordinate substrate. C82 (proton donor) is an active-site residue. Residues 83 to 84, N167, N200, and 218 to 219 contribute to the substrate site; these read GN and ER. Residue C227 is the Proton acceptor of the active site. 228–229 provides a ligand contact to substrate; the sequence is GS.

Belongs to the diaminopimelate epimerase family. As to quaternary structure, homodimer.

Its subcellular location is the cytoplasm. The enzyme catalyses (2S,6S)-2,6-diaminopimelate = meso-2,6-diaminopimelate. It functions in the pathway amino-acid biosynthesis; L-lysine biosynthesis via DAP pathway; DL-2,6-diaminopimelate from LL-2,6-diaminopimelate: step 1/1. Catalyzes the stereoinversion of LL-2,6-diaminopimelate (L,L-DAP) to meso-diaminopimelate (meso-DAP), a precursor of L-lysine and an essential component of the bacterial peptidoglycan. This Xylella fastidiosa (strain M12) protein is Diaminopimelate epimerase.